We begin with the raw amino-acid sequence, 120 residues long: Secreted RxLR effector protein RXLR-C26 (120 aa).

Residues 1-29 form the signal peptide; the sequence is MTGILCFPPFARFFMLLSGCAWLAGVSSG. The short motif at 57 to 77 is the RxLR-dEER element; sequence RNLRGHINSAIIEANDTSEER. N-linked (GlcNAc...) asparagine glycosylation is present at asparagine 71.

Belongs to the RxLR effector family.

Its subcellular location is the secreted. The protein localises to the host cytoplasm. The protein resides in the host nucleus. Functionally, secreted effector that does not suppress pattern-triggered immunity (PTI) in plant host. The sequence is that of Secreted RxLR effector protein RXLR-C26 from Plasmopara halstedii (Downy mildew of sunflower).